Here is a 482-residue protein sequence, read N- to C-terminus: Iroquois-class homeodomain protein irx-5 (482 aa).

Residues 109-171 (DPAYRKNATR…NARRRLKKEN (63 aa)) constitute a DNA-binding region (homeobox). 2 disordered regions span residues 173-307 (MTWT…HQSH) and 462-482 (QSQADLNKDTPYEMKKGMSSI). The span at 182–198 (EDEEDDENIDLEKNEED) shows a compositional bias: acidic residues. Over residues 199-256 (DPRKLEEKGDQDGDAGDQKRSPSAVDFDRLEGEVRQGKELDQTRSDSEQNEVEERNDL) the composition is skewed to basic and acidic residues. A compositionally biased stretch (pro residues) spans 264-273 (PTSPLCPPDQ). Residues 284 to 305 (HRHTVHNHHHQSIQQLHHHSHQ) show a composition bias toward basic residues. The segment covering 467–482 (LNKDTPYEMKKGMSSI) has biased composition (basic and acidic residues).

Belongs to the TALE/IRO homeobox family. Expressed in the neural plate in overlapping patterns with other irx members, which all share an anterior border of expression. Broadly expressed in the tailbud rhombencephalon (hindbrain). Outside the nervous system and at tailbud stages, expressed in the developing otic vesicle and branchial arches.

It localises to the nucleus. In terms of biological role, acts partially redundantly with other irx members in neural patterning. Required for formation of the posterior forebrain, midbrain, hindbrain, and to a lesser extent, spinal cord. Patterns the neuroectoderm in both the anterior/posterior and dorsal/ventral axes. Does not appear to play a role in pronephros kidney development. Involved in craniofacial and gonadal development. Modulates the migration of progenitor cell populations in branchial arches and gonads by repressing CXCL12. This is Iroquois-class homeodomain protein irx-5 from Xenopus tropicalis (Western clawed frog).